Here is a 134-residue protein sequence, read N- to C-terminus: RxLR effector protein Avh238 (134 aa).

Positions 1–21 (MRGVFFVAVAVAIFARSSAEA) are cleaved as a signal peptide. The short motif at 44–68 (RFLRVADPEDDDLAAPADDGKTEER) is the RxLR-dEER element. Positions 49–70 (ADPEDDDLAAPADDGKTEERAP) are disordered. A compositionally biased stretch (basic and acidic residues) spans 61-70 (DDGKTEERAP).

Belongs to the RxLR effector family. Interacts with host 1-aminocyclopropane-1-carboxylate synthases ACS1, ACS2, ACS3, ACS10 and ACS12.

The protein resides in the secreted. It is found in the host cytoplasm. Its subcellular location is the host nucleus. Functionally, effector that suppresses plant defense responses during the early stages of pathogen infection. Suppresses cell death induced by effectors and PAMPs in plant hosts. Is able to induced cell death in tomato, tobacco, eggplant, and potato, but not in A.thaliana. Interacts with and destabilizes host 1-aminocyclopropane-1-carboxylate synthases. By suppressing type2 ACS-catalyzed ethylene biosynthesis, Avh238 facilitates Phytophthora infection. This is RxLR effector protein Avh238 (Avh238) from Phytophthora sojae (strain P6497) (Soybean stem and root rot agent).